The primary structure comprises 575 residues: Cytokinin dehydrogenase 1 (575 aa).

A signal peptide spans 1 to 31 (MGLTSSLRFHRQNNKTFLGIFMILVLSCIPG). N-linked (GlcNAc...) asparagine glycans are attached at residues Asn14, Asn38, and Asn115. In terms of domain architecture, FAD-binding PCMH-type spans 84 to 262 (YQLPPLAILH…TRARISLEPA (179 aa)). FAD-binding residues include Ala120, Gly122, and Gly124. A Pros-8alpha-FAD histidine modification is found at His125. FAD-binding residues include Ser126, Gln130, Asp186, Thr191, Ser197, Ile201, and Ile252. Residues Asn303, Asn318, Asn437, and Asn467 are each glycosylated (N-linked (GlcNAc...) asparagine). FAD contacts are provided by Tyr498 and Gln536.

The protein belongs to the oxygen-dependent FAD-linked oxidoreductase family. The cofactor is FAD. Expressed in shoot apexes, lateral shoot meristems, growing tissues of young flowers, and weakly at the root-hypocotyl junction.

It localises to the vacuole. It carries out the reaction N(6)-dimethylallyladenine + A + H2O = 3-methyl-2-butenal + adenine + AH2. Its function is as follows. Catalyzes the oxidation of cytokinins, a family of N(6)-substituted adenine derivatives that are plant hormones, where the substituent is an isopentenyl group. Catalyzes in vitro the oxidation of various types of cytokinin nucleotides that are known as direct products of cytokinin biosynthesis. Promotes adventitious root initiation downstream of MYC2-dependent jasmonate signaling. Cytokinin degraded by CKX1 is required for cell division in the female gametophyte by modulating the expression of cell cycle genes. The protein is Cytokinin dehydrogenase 1 (CKX1) of Arabidopsis thaliana (Mouse-ear cress).